The primary structure comprises 571 residues: Proline--tRNA ligase (571 aa).

The protein belongs to the class-II aminoacyl-tRNA synthetase family. ProS type 1 subfamily. Homodimer.

Its subcellular location is the cytoplasm. The catalysed reaction is tRNA(Pro) + L-proline + ATP = L-prolyl-tRNA(Pro) + AMP + diphosphate. In terms of biological role, catalyzes the attachment of proline to tRNA(Pro) in a two-step reaction: proline is first activated by ATP to form Pro-AMP and then transferred to the acceptor end of tRNA(Pro). As ProRS can inadvertently accommodate and process non-cognate amino acids such as alanine and cysteine, to avoid such errors it has two additional distinct editing activities against alanine. One activity is designated as 'pretransfer' editing and involves the tRNA(Pro)-independent hydrolysis of activated Ala-AMP. The other activity is designated 'posttransfer' editing and involves deacylation of mischarged Ala-tRNA(Pro). The misacylated Cys-tRNA(Pro) is not edited by ProRS. This Histophilus somni (strain 2336) (Haemophilus somnus) protein is Proline--tRNA ligase.